Reading from the N-terminus, the 43-residue chain is Non-structural protein of 4.9 kDa (43 aa).

Belongs to the coronaviruses ns4.9 protein family.

The sequence is that of Non-structural protein of 4.9 kDa from Bos taurus (Bovine).